A 640-amino-acid chain; its full sequence is Protein cereblon (640 aa).

The segment covering 1–11 has biased composition (acidic residues); sequence MDDEETAEIDE. 2 disordered regions span residues 1–25 and 92–159; these read MDDE…ELGP and REDP…EAVP. Low complexity predominate over residues 113–137; sequence QPAQQEEQASLPYDSPSRASISSRH. Positions 278-506 constitute a Lon N-terminal domain; sequence RMLIFMHQHI…IIDTTLKQES (229 aa). Residues 505 to 614 enclose the CULT domain; it reads ESLFYCRYCN…LAGSSVRIGK (110 aa). 4 residues coordinate Zn(2+): Cys-510, Cys-513, Cys-579, and Cys-582.

The protein belongs to the CRBN family. In terms of assembly, likely a component of a DCX (DDB1-CUL4-X-box) protein ligase complex. May interact with pic/DDB1. In terms of processing, ubiquitinated.

The protein resides in the nucleus. It functions in the pathway protein modification; protein ubiquitination. Its function is as follows. Substrate recognition component of a DCX (DDB1-CUL4-X-box) E3 protein ligase complex that mediates the ubiquitination and subsequent proteasomal degradation of target proteins. Has an essential role in mediating growth by negatively regulating insulin signaling. It also has a role in maintaining presynaptic function in the neuromuscular junction synapses of third-instar larvae. The protein is Protein cereblon of Drosophila virilis (Fruit fly).